Consider the following 103-residue polypeptide: Large ribosomal subunit protein uL24 (103 aa).

Belongs to the universal ribosomal protein uL24 family. Part of the 50S ribosomal subunit.

Functionally, one of two assembly initiator proteins, it binds directly to the 5'-end of the 23S rRNA, where it nucleates assembly of the 50S subunit. One of the proteins that surrounds the polypeptide exit tunnel on the outside of the subunit. The protein is Large ribosomal subunit protein uL24 of Rhizobium meliloti (strain 1021) (Ensifer meliloti).